The following is a 327-amino-acid chain: Pyruvate dehydrogenase E1 component subunit beta (327 aa).

Glu60 lines the thiamine diphosphate pocket. Positions 113, 161, 162, and 164 each coordinate K(+).

Heterodimer of an alpha and a beta chain. Thiamine diphosphate serves as cofactor.

It is found in the plastid. The protein resides in the chloroplast. The enzyme catalyses N(6)-[(R)-lipoyl]-L-lysyl-[protein] + pyruvate + H(+) = N(6)-[(R)-S(8)-acetyldihydrolipoyl]-L-lysyl-[protein] + CO2. Its function is as follows. The pyruvate dehydrogenase complex catalyzes the overall conversion of pyruvate to acetyl-CoA and CO(2). It contains multiple copies of three enzymatic components: pyruvate dehydrogenase (E1), dihydrolipoamide acetyltransferase (E2) and lipoamide dehydrogenase (E3). This Cyanidium caldarium (Red alga) protein is Pyruvate dehydrogenase E1 component subunit beta (pdhB).